Consider the following 562-residue polypeptide: NAD-dependent malic enzyme (562 aa).

Catalysis depends on Tyr101, which acts as the Proton donor. Arg154 contributes to the NAD(+) binding site. The active-site Proton acceptor is the Lys172. Glu243, Asp244, and Asp267 together coordinate a divalent metal cation. Residues Asp267 and Asn415 each contribute to the NAD(+) site.

This sequence belongs to the malic enzymes family. In terms of assembly, homotetramer. The cofactor is Mg(2+). Mn(2+) is required as a cofactor.

It catalyses the reaction (S)-malate + NAD(+) = pyruvate + CO2 + NADH. The enzyme catalyses oxaloacetate + H(+) = pyruvate + CO2. The sequence is that of NAD-dependent malic enzyme from Shewanella halifaxensis (strain HAW-EB4).